We begin with the raw amino-acid sequence, 157 residues long: Small ribosomal subunit protein uS7cz/uS7cy (157 aa).

This sequence belongs to the universal ribosomal protein uS7 family. As to quaternary structure, part of the 30S ribosomal subunit.

Its subcellular location is the plastid. It is found in the chloroplast. In terms of biological role, one of the primary rRNA binding proteins, it binds directly to 16S rRNA where it nucleates assembly of the head domain of the 30S subunit. The protein is Small ribosomal subunit protein uS7cz/uS7cy (rps7-A) of Welwitschia mirabilis (Tree tumbo).